The following is a 746-amino-acid chain: Double-stranded RNA-specific editase B2 (746 aa).

2 disordered regions span residues 1–36 and 50–105; these read MASVLGSGRGSGGLSSQLKCKSKRRRRRRSKRKDKV and SPGT…PLEE. Basic residues predominate over residues 20–34; it reads CKSKRRRRRRSKRKD. The interval 23-35 is R-domain (ssRNA-binding); that stretch reads KRRRRRRSKRKDK. 2 consecutive DRBM domains span residues 126-192 and 284-348; these read TPKN…SFVQ and NPVV…ALFD. The A to I editase domain maps to 415-742; it reads VLSSGTKCIS…VRKPPEQDQF (328 aa). His439 provides a ligand contact to Zn(2+). Glu441 serves as the catalytic Proton donor. Cys497 and Cys562 together coordinate Zn(2+).

In terms of tissue distribution, brain specific.

Its subcellular location is the nucleus. Functionally, lacks editing activity. It prevents the binding of other ADAR enzymes to targets in vitro, and decreases the efficiency of these enzymes. Capable of binding to dsRNA but also to ssRNA. In Rattus norvegicus (Rat), this protein is Double-stranded RNA-specific editase B2 (Adarb2).